The following is an 802-amino-acid chain: Xylanase/beta-glucanase (802 aa).

The signal sequence occupies residues 1–31 (MKKSIFKRYAAAVGLMASVLMFTAVPTTSNA). The 208-residue stretch at 32–239 (ADDQKTGKVG…SNGSANVKSI (208 aa)) folds into the GH11 domain. Glutamate 124 functions as the Nucleophile in the catalytic mechanism. The Proton donor role is filled by glutamate 226. Residues 245-523 (IDIPDPEPIK…SYLEGHDPSK (279 aa)) are b. In terms of domain architecture, CBM-cenC spans 258–404 (NGYYLKENFE…YMDGAYAGVK (147 aa)). 2 disordered regions span residues 414–436 (SQSV…PSVT) and 533–564 (TTTT…YRDL). Composition is skewed to low complexity over residues 419–436 (PPVT…PSVT) and 533–553 (TTTT…TTTT). The 80-residue stretch at 434–513 (SVTKWGDANC…LIRAISELPE (80 aa)) folds into the Dockerin domain. The interval 524–555 (TTTTTTRITTTTTTTTTTTTSKTTTTTTTTSP) is linker. The GH16 domain maps to 556-792 (AMHGGYRDLG…WVTYNKNGVQ (237 aa)). The active-site Nucleophile is the glutamate 684.

It in the N-terminal section; belongs to the glycosyl hydrolase 11 (cellulase G) family. This sequence in the C-terminal section; belongs to the glycosyl hydrolase 16 family.

The enzyme catalyses Endohydrolysis of (1-&gt;4)-beta-D-xylosidic linkages in xylans.. The catalysed reaction is Hydrolysis of (1-&gt;4)-beta-D-glucosidic linkages in beta-D-glucans containing (1-&gt;3)- and (1-&gt;4)-bonds.. It functions in the pathway glycan degradation; xylan degradation. Contains two catalytic domains with xylanase and endo-beta-1,3-1,4 glucanase activities. The polypeptide is Xylanase/beta-glucanase (xynD) (Ruminococcus flavefaciens).